The primary structure comprises 788 residues: Glucan 1,3-beta-glucosidase (788 aa).

An N-terminal signal peptide occupies residues 1 to 42 (MRFSSLLACLGAVGIQAAAIPFQRRVDNTTDSGSLDAAQAAA). Residues Asn-28, Asn-233, Asn-381, and Asn-773 are each glycosylated (N-linked (GlcNAc...) asparagine).

This sequence belongs to the glycosyl hydrolase 55 family.

It carries out the reaction Successive hydrolysis of beta-D-glucose units from the non-reducing ends of (1-&gt;3)-beta-D-glucans, releasing alpha-glucose.. This chain is Glucan 1,3-beta-glucosidase (EXG1), found in Cochliobolus carbonum (Maize leaf spot fungus).